A 147-amino-acid polypeptide reads, in one-letter code: Hemoglobin subunit beta (147 aa).

Positions N3–H147 constitute a Globin domain. Heme b is bound by residues H64 and H93.

The protein belongs to the globin family. Heterotetramer of two alpha chains and two beta chains. As to expression, red blood cells.

Its function is as follows. Involved in oxygen transport from gills to the various peripheral tissues. The polypeptide is Hemoglobin subunit beta (hbb) (Gymnodraco acuticeps (Antarctic dragonfish)).